The sequence spans 258 residues: Tryptophan synthase alpha chain (258 aa).

Active-site proton acceptor residues include Glu47 and Asp58.

Belongs to the TrpA family. In terms of assembly, tetramer of two alpha and two beta chains.

The enzyme catalyses (1S,2R)-1-C-(indol-3-yl)glycerol 3-phosphate + L-serine = D-glyceraldehyde 3-phosphate + L-tryptophan + H2O. The protein operates within amino-acid biosynthesis; L-tryptophan biosynthesis; L-tryptophan from chorismate: step 5/5. In terms of biological role, the alpha subunit is responsible for the aldol cleavage of indoleglycerol phosphate to indole and glyceraldehyde 3-phosphate. This is Tryptophan synthase alpha chain from Bacillus anthracis (strain CDC 684 / NRRL 3495).